The sequence spans 444 residues: Tubulin beta-7 chain (444 aa).

GTP is bound by residues Q11, E69, S138, G142, T143, G144, N204, and N226. E69 lines the Mg(2+) pocket.

This sequence belongs to the tubulin family. Dimer of alpha and beta chains. A typical microtubule is a hollow water-filled tube with an outer diameter of 25 nm and an inner diameter of 15 nM. Alpha-beta heterodimers associate head-to-tail to form protofilaments running lengthwise along the microtubule wall with the beta-tubulin subunit facing the microtubule plus end conferring a structural polarity. Microtubules usually have 13 protofilaments but different protofilament numbers can be found in some organisms and specialized cells. Mg(2+) serves as cofactor.

Its subcellular location is the cytoplasm. The protein resides in the cytoskeleton. Tubulin is the major constituent of microtubules, a cylinder consisting of laterally associated linear protofilaments composed of alpha- and beta-tubulin heterodimers. Microtubules grow by the addition of GTP-tubulin dimers to the microtubule end, where a stabilizing cap forms. Below the cap, tubulin dimers are in GDP-bound state, owing to GTPase activity of alpha-tubulin. The polypeptide is Tubulin beta-7 chain (Gossypium hirsutum (Upland cotton)).